The sequence spans 403 residues: Semaphorin-like protein A39 (403 aa).

The N-terminal stretch at 1–14 (MIPLLFILFYFANG) is a signal peptide. The Sema domain occupies 15 to 403 (IEWHKFETSE…MPQMKKILKM (389 aa)).

It belongs to the semaphorin family. Interacts with host VESPR.

The protein localises to the secreted. Its function is as follows. Acts as a semaphorin-like protein and binds to host plexin C1 receptor. May alter the movement of host plexin C1-expressing cells including dendritic cells, monocytes, or granulocytes in the proximity of infected cells. May also regulate host cell cytoskeleton of neighboring cells to improve viral infection. This Homo sapiens (Human) protein is Semaphorin-like protein A39.